A 376-amino-acid polypeptide reads, in one-letter code: Alanine racemase (376 aa).

Residue Lys40 is the Proton acceptor; specific for D-alanine of the active site. Lys40 carries the N6-(pyridoxal phosphate)lysine modification. Arg138 is a substrate binding site. Tyr270 acts as the Proton acceptor; specific for L-alanine in catalysis. Residue Met317 coordinates substrate.

It belongs to the alanine racemase family. Requires pyridoxal 5'-phosphate as cofactor.

It carries out the reaction L-alanine = D-alanine. Its pathway is amino-acid biosynthesis; D-alanine biosynthesis; D-alanine from L-alanine: step 1/1. In terms of biological role, catalyzes the interconversion of L-alanine and D-alanine. May also act on other amino acids. This chain is Alanine racemase (alr), found in Lactobacillus acidophilus (strain ATCC 700396 / NCK56 / N2 / NCFM).